The following is a 368-amino-acid chain: Tetraacyldisaccharide 4'-kinase (368 aa).

Residue 66 to 73 participates in ATP binding; sequence TVGGTGKT.

Belongs to the LpxK family.

It catalyses the reaction a lipid A disaccharide + ATP = a lipid IVA + ADP + H(+). It participates in glycolipid biosynthesis; lipid IV(A) biosynthesis; lipid IV(A) from (3R)-3-hydroxytetradecanoyl-[acyl-carrier-protein] and UDP-N-acetyl-alpha-D-glucosamine: step 6/6. Functionally, transfers the gamma-phosphate of ATP to the 4'-position of a tetraacyldisaccharide 1-phosphate intermediate (termed DS-1-P) to form tetraacyldisaccharide 1,4'-bis-phosphate (lipid IVA). This Desulfatibacillum aliphaticivorans protein is Tetraacyldisaccharide 4'-kinase.